The following is a 255-amino-acid chain: MNLLEEKIRAANAAGRPALIPFLTAGFPDRATFWPTLMELDENGADIIEIGVPFSDPVADGPVVEEASRRALSDGVNLRGILAELAQRKGLVKAGLVLMGYLNPFLQYGYEKLAQDAARGGVHGFIVPDLPHEESGPLHRALKKEGIALIPLVGPNTSAERMALYAEEGEGYVYVVSVMGITGERGDVAPQVADTMRRARSVFSLPLALGFGLREPGQLRELPPDARPDAAVFGSALLNHLEEGHSAEEFMARWK.

Active-site proton acceptor residues include glutamate 49 and aspartate 60.

Belongs to the TrpA family. Tetramer of two alpha and two beta chains.

It carries out the reaction (1S,2R)-1-C-(indol-3-yl)glycerol 3-phosphate + L-serine = D-glyceraldehyde 3-phosphate + L-tryptophan + H2O. It participates in amino-acid biosynthesis; L-tryptophan biosynthesis; L-tryptophan from chorismate: step 5/5. Its function is as follows. The alpha subunit is responsible for the aldol cleavage of indoleglycerol phosphate to indole and glyceraldehyde 3-phosphate. The chain is Tryptophan synthase alpha chain from Desulfovibrio desulfuricans (strain ATCC 27774 / DSM 6949 / MB).